We begin with the raw amino-acid sequence, 235 residues long: MKLGVNIDHVATLRNARGASYPDPLKAAKIAINAGADFLTVHLREDRRHIRDEDVFNLKQNISTELNLEIAATEEMLKIAKEVKPYSICIVPEKREELTTEGGLNIVNMHSKLSGIIEEMHSFDIKVSLFIDPNINQLKYLEKLERKPDIIEIHTGDYCDNPSEEKLKLITNSAEYINNLGIECHAGHGINYKHAKEIKKIPHISALNIGHSLISEAIFHGLHSVTKKMKMTISK.

Residue Asn-6 participates in 3-amino-2-oxopropyl phosphate binding. 1-deoxy-D-xylulose 5-phosphate is bound at residue 8–9; it reads DH. Arg-17 is a binding site for 3-amino-2-oxopropyl phosphate. His-42 functions as the Proton acceptor in the catalytic mechanism. The 1-deoxy-D-xylulose 5-phosphate site is built by Arg-44 and His-49. Glu-69 functions as the Proton acceptor in the catalytic mechanism. Thr-99 contacts 1-deoxy-D-xylulose 5-phosphate. His-188 (proton donor) is an active-site residue. 3-amino-2-oxopropyl phosphate is bound by residues Gly-189 and 210-211; that span reads GH.

It belongs to the PNP synthase family. In terms of assembly, homooctamer; tetramer of dimers.

It is found in the cytoplasm. The enzyme catalyses 3-amino-2-oxopropyl phosphate + 1-deoxy-D-xylulose 5-phosphate = pyridoxine 5'-phosphate + phosphate + 2 H2O + H(+). The protein operates within cofactor biosynthesis; pyridoxine 5'-phosphate biosynthesis; pyridoxine 5'-phosphate from D-erythrose 4-phosphate: step 5/5. In terms of biological role, catalyzes the complicated ring closure reaction between the two acyclic compounds 1-deoxy-D-xylulose-5-phosphate (DXP) and 3-amino-2-oxopropyl phosphate (1-amino-acetone-3-phosphate or AAP) to form pyridoxine 5'-phosphate (PNP) and inorganic phosphate. The polypeptide is Pyridoxine 5'-phosphate synthase (Wolbachia pipientis subsp. Culex pipiens (strain wPip)).